A 215-amino-acid polypeptide reads, in one-letter code: MSADRHYSPIDRFLLQADSALRTLLPFSGQPARPSPAIVEPDGELSEEDTRHIAGLMRINHTGEVCAQALYQGQSLTARLPEVREAMEEAAEEEIDHLAWCEQRIRQLGSRPSVLNPIFYGLSFGVGAAAGLVSDRVSLGFVAATEDQVCKHLDEHLAQIPQEDRKSRAILEQMRVDEEQHSSNALAAGGLRFPAPVKLGMSLLAKVMTKSTYRI.

Residues E64, E94, H97, E146, E178, and H181 each coordinate Fe cation.

This sequence belongs to the COQ7 family. Fe cation serves as cofactor.

The protein resides in the cell membrane. The catalysed reaction is a 5-methoxy-2-methyl-3-(all-trans-polyprenyl)benzene-1,4-diol + AH2 + O2 = a 3-demethylubiquinol + A + H2O. It participates in cofactor biosynthesis; ubiquinone biosynthesis. Functionally, catalyzes the hydroxylation of 2-nonaprenyl-3-methyl-6-methoxy-1,4-benzoquinol during ubiquinone biosynthesis. The sequence is that of 3-demethoxyubiquinol 3-hydroxylase from Pseudomonas paraeruginosa (strain DSM 24068 / PA7) (Pseudomonas aeruginosa (strain PA7)).